Consider the following 1128-residue polypeptide: Lysylphosphatidylglycerol biosynthesis bifunctional protein LysX (1128 aa).

A disordered region spans residues 1-47; that stretch reads MDNPPPTGVAPRHLPPGSVHTGKVTASLSHRRPDSVQDAPPAPVPHR. The phosphatidylglycerol lysyltransferase stretch occupies residues 1–632; sequence MDNPPPTGVA…GLHADGSPPD (632 aa). 6 helical membrane-spanning segments follow: residues 55-75, 97-117, 121-141, 147-167, 184-204, and 240-260; these read VPHIAGLVLGVFAVACLLWSL, APDTNVMWALIVGLLAGAIAS, IAWWLLVGYLTLFAVANGLRF, INALVAMIVQVGVVGLLIAAW, GVLVGGLAIGCLLGWGLVEVF, and FVNVLLGLFGAIALLAAVLTL. Residues 619-644 form a disordered region; that stretch reads DTLTGLHADGSPPDWPKPDLLDSGPR. Positions 633-1128 are lysine--tRNA ligase; sequence WPKPDLLDSG…TLPFPLVKPR (496 aa). Residues 634 to 644 show a composition bias toward basic and acidic residues; it reads PKPDLLDSGPR. Mg(2+)-binding residues include Asp1040 and Glu1047.

The protein in the N-terminal section; belongs to the LPG synthetase family. In the C-terminal section; belongs to the class-II aminoacyl-tRNA synthetase family. Mg(2+) serves as cofactor.

The protein resides in the cell membrane. It catalyses the reaction tRNA(Lys) + L-lysine + ATP = L-lysyl-tRNA(Lys) + AMP + diphosphate. It carries out the reaction L-lysyl-tRNA(Lys) + a 1,2-diacyl-sn-glycero-3-phospho-(1'-sn-glycerol) = a 1,2-diacyl-sn-glycero-3-phospho-1'-(3'-O-L-lysyl)-sn-glycerol + tRNA(Lys). Functionally, catalyzes the production of L-lysyl-tRNA(Lys)transfer and the transfer of a lysyl group from L-lysyl-tRNA(Lys) to membrane-bound phosphatidylglycerol (PG), which produces lysylphosphatidylglycerol (LPG), one of the components of the bacterial membrane with a positive net charge. LPG synthesis contributes to the resistance to cationic antimicrobial peptides (CAMPs) and likely protects M.tuberculosis against the CAMPs produced by competiting microorganisms (bacteriocins). In fact, the modification of anionic phosphatidylglycerol with positively charged L-lysine results in repulsion of the peptides. The sequence is that of Lysylphosphatidylglycerol biosynthesis bifunctional protein LysX (lysX) from Nocardia farcinica (strain IFM 10152).